The sequence spans 320 residues: MHKSANSKTRKQSKGLHPRNIHRNGYDFDALKACHPPLVQYIKCNPVGAATIDFANSAAVKALNTALLQHHYKIESWSIPDGALCPPIPGRIDYIHYIAELLGCPLPSGKINTANTCTNNAVKMLDVGTGANGIYTLLACAVYGWRCVGSDINSESLANVKAVLANNPTLNANISLRLQPNKDAFFSQIIQTDDYFDVSVCNPPFHASQEEASKGTNRKLHNLARSRNKAHTAKQPSLNFGGQHAELWCNGGERLFLKKMIKESQAFAQQVGWFTSLVSKSENVQPALKLIRKLGATEVREIEMMQGNKKTRVIAWRFKP.

The tract at residues 1–20 (MHKSANSKTRKQSKGLHPRN) is disordered.

Belongs to the methyltransferase superfamily. METTL16/RlmF family.

It is found in the cytoplasm. It catalyses the reaction adenosine(1618) in 23S rRNA + S-adenosyl-L-methionine = N(6)-methyladenosine(1618) in 23S rRNA + S-adenosyl-L-homocysteine + H(+). In terms of biological role, specifically methylates the adenine in position 1618 of 23S rRNA. The polypeptide is Ribosomal RNA large subunit methyltransferase F (Saccharophagus degradans (strain 2-40 / ATCC 43961 / DSM 17024)).